Consider the following 1122-residue polypeptide: Midnolin homolog (1122 aa).

One can recognise a Ubiquitin-like domain in the interval 69 to 143 (INLNISTTTG…IILIPNVETG (75 aa)). The interval 210-300 (GGASGSSINA…SGQRSSGRIG (91 aa)) is required for interaction with Pc. Disordered stretches follow at residues 257-399 (VGGS…STLN), 596-630 (KHRH…HFFN), 645-677 (FATS…GAGA), 746-775 (GVVS…KSGS), 840-876 (APTT…RSKM), 886-905 (KCNS…ASGS), 922-955 (AATK…NGCT), and 1067-1122 (AAPA…DTAA). Residues 266–298 (SGTSSSSSSTSSSSSSSSSSSRTRSSGQRSSGR) show a composition bias toward low complexity. 2 stretches are compositionally biased toward basic residues: residues 300–310 (GHGHVHSHQHP) and 321–352 (SHGH…HHHN). The span at 375–397 (PSSSGASGSAPATGTGQSQSSST) shows a compositional bias: low complexity. The span at 596 to 610 (KHRHYHGQGHGHGHG) shows a compositional bias: basic residues. Low complexity-rich tracts occupy residues 612-627 (GHSS…SSSH), 648-663 (SSSS…SSSP), 746-766 (GVVS…AASG), 856-867 (SGSSSTTSSGSG), 889-903 (SRAQ…TLAS), and 922-936 (AATK…SSHS). Polar residues-rich tracts occupy residues 937–954 (CCQT…SNGC) and 1071–1085 (NSIT…VNGN). Over residues 1086 to 1107 (TSTAPATAATSAAAAPTAAPPS) the composition is skewed to low complexity.

Interacts with PRC1 complex member polycomb protein Pc; the interaction targets Pc for ubiquitin-independent proteasomal degradation. Does not interact with PRC1 members Ph, Psc or Sce so does not appear to be a member of the PRC1 complex. Interacts with 26S proteasome regulatory subunit Rpn10.

Its subcellular location is the nucleus. In terms of biological role, facilitates ubiquitin-independent proteasomal degradation of polycomb protein Pc by interacting directly with the proteasome and recruiting Pc to it. The polypeptide is Midnolin homolog (Drosophila melanogaster (Fruit fly)).